Here is a 211-residue protein sequence, read N- to C-terminus: Ribosomal RNA small subunit methyltransferase G (211 aa).

S-adenosyl-L-methionine is bound by residues Gly-73, Ile-126–Glu-127, and Arg-142.

This sequence belongs to the methyltransferase superfamily. RNA methyltransferase RsmG family.

The protein resides in the cytoplasm. It carries out the reaction guanosine(527) in 16S rRNA + S-adenosyl-L-methionine = N(7)-methylguanosine(527) in 16S rRNA + S-adenosyl-L-homocysteine. Its function is as follows. Specifically methylates the N7 position of guanine in position 527 of 16S rRNA. In Methylorubrum populi (strain ATCC BAA-705 / NCIMB 13946 / BJ001) (Methylobacterium populi), this protein is Ribosomal RNA small subunit methyltransferase G.